We begin with the raw amino-acid sequence, 325 residues long: Hydroxylase/desaturase poxK (325 aa).

Low complexity predominate over residues 1-12 (MTATATPVPTVA). The disordered stretch occupies residues 1 to 25 (MTATATPVPTVASHAQDITLPPPPK).

This sequence belongs to the asaB hydroxylase/desaturase family.

It participates in secondary metabolite biosynthesis. Functionally, hydroxylase/desaturase; part of the gene cluster that mediates the biosynthesis of oxaleimides, cytotoxic compounds containing an unusual disubstituted succinimide moiety. The first step of the pathway is provided by the HR-PKS poxF that serves in a new mode of collaborative biosynthesis with the PKS-NRPS poxE, by providing the olefin containing amino acid substrate via the synthesis of an ACP-bound dec-4-enoate. The cytochrome P450 monooxygenase poxM-catalyzed oxidation at the alpha-position creates the enzyme-bound 2-hydroxydec-4-enoyl-ACP thioester, which may be prone to spontaneous hydrolysis to yield 2-hydroxydec-4-enoic acid due to increased electrophilicity of the carbonyl. 2-hydroxydec-4-enoic acid can then be further oxidized by poxM to yield the alpha-ketoacid 2-oxodec-4-enoicacid, which is reductively aminated by the aminotransferase poxL to yield (S,E)-2-aminodec-4-enoic acid. The Hybrid PKS-NRPS synthetase poxE then performs condensation between the octaketide product of its PKS modules and the amino group of (S,E)-2-aminodec-4-enoic acid which is activated and incorporated by the adenylation domain. The resulting aminoacyl product can be cyclized by the Diels-Alderase PoxQ and reductively released by the reductive (R) domain of poxE to yield an aldehyde intermediate. The released aldehyde is then substrate for a Knoevenagel condensation by the hydrolyase poxO followed by an oxidation at the 5-position of the pyrrolidone ring. The presence of the olefin from the amino acid building block allows for migration of the substituted allyl group to occur. This allylic transposition reaction takes place in a conjugate addition, semipinacol-like fashion to yield a succinimide intermediate. Iterative two-electron oxidations of the C7 methyl of the succinimide intermediate to the carboxylic acid can be catalyzed by one of two remaining cytochrome P450 monooxygenasess poxC or poxD to yield oxaleimide A. Subsequent oxidation yields the maleimide scaffold oxaleimide I. Both oxaleimide A and oxaleimide I can undergo oxidative modifications in the decalin ring to yield the series of products oxaleimides B to H. This Penicillium oxalicum protein is Hydroxylase/desaturase poxK.